The chain runs to 224 residues: tRNA (guanine-N(7)-)-methyltransferase (224 aa).

E45, E70, D97, and D119 together coordinate S-adenosyl-L-methionine. Residue D119 is part of the active site. Residues K123, D155, and 199 to 202 contribute to the substrate site; that span reads TEYE.

Belongs to the class I-like SAM-binding methyltransferase superfamily. TrmB family.

It catalyses the reaction guanosine(46) in tRNA + S-adenosyl-L-methionine = N(7)-methylguanosine(46) in tRNA + S-adenosyl-L-homocysteine. It functions in the pathway tRNA modification; N(7)-methylguanine-tRNA biosynthesis. In terms of biological role, catalyzes the formation of N(7)-methylguanine at position 46 (m7G46) in tRNA. The polypeptide is tRNA (guanine-N(7)-)-methyltransferase (Ureaplasma parvum serovar 3 (strain ATCC 27815 / 27 / NCTC 11736)).